The chain runs to 1299 residues: GRB10-interacting GYF protein 2 (1299 aa).

Residue A2 is modified to N-acetylalanine. S19, S26, and S30 each carry phosphoserine. The short motif at 40–50 is the 4EHP-binding motif element; that stretch reads DYRYGREEMLA. Omega-N-methylarginine is present on residues R107, R118, and R120. The segment at 112–131 is disordered; the sequence is TVVGAPRGRSSSRGRGRGRG. At S139 the chain carries Phosphoserine. 3 disordered regions span residues 147–195, 214–247, and 266–433; these read FGRG…RKHE, EDED…GWRE, and RGYR…VADV. At R149 the chain carries Omega-N-methylarginine. Over residues 151–182 the composition is skewed to basic and acidic residues; it reads GGREMHRSQSWEERGDRRFEKPGRKDVGRPNF. Phosphoserine is present on residues S160, S189, and S236. A compositionally biased stretch (basic and acidic residues) spans 225-247; that stretch reads SRRDGERWRPHSPDGPRSAGWRE. Positions 280–310 match the DDX6 binding motif motif; sequence DDRDSLPEWCLEDAEEEMGTFDSSGAFLSLK. Positions 289–298 are enriched in acidic residues; sequence CLEDAEEEMG. Basic and acidic residues-rich tracts occupy residues 312–329 and 338–363; these read VQKE…RPVD and EGSH…DRVG. Residues 369 to 392 are compositionally biased toward polar residues; sequence ETPQTSSSSARPGTPSDHQSQEAS. Residue T382 is modified to Phosphothreonine. S388 carries the phosphoserine modification. The span at 393-414 shows a compositional bias: basic and acidic residues; that stretch reads QFERKDEPKTEQTEKAEEETRM. The 49-residue stretch at 533-581 folds into the GYF domain; sequence MQKWYYKDPQGEIQGPFNNQEMAEWFQAGYFTMSLLVKRACDESFQPLG. The tract at residues 547 to 563 is required for GRB10-binding; that stretch reads GPFNNQEMAEWFQAGYF. S593 carries the post-translational modification Phosphoserine. Disordered regions lie at residues 733-793, 845-866, 872-891, 917-936, 957-997, 1009-1048, and 1084-1112; these read KAAK…QEEA, EEAA…ENRL, AARL…EVQR, QLAQ…SNTT, ERQL…KPSG, EARQ…VWGS, and KEVG…NRQN. The tract at residues 860–919 is required for interaction with SARS-CoV-2 non-structural protein 2 (nsp2); sequence RLEENRLRMEEEAARLRHEEEERKRKELEVQRQKELMRQRQQQQEALRRLQQQQQQQQLA. The segment covering 924–936 has biased composition (polar residues); it reads PSSSTWGQQSNTT. Over residues 957–972 the composition is skewed to basic and acidic residues; sequence ERQLREEQRRQQRELM. The residue at position 993 (S993) is a Phosphoserine. Over residues 1013 to 1025 the composition is skewed to low complexity; the sequence is MQKQQQQQQQHQQ. Residues 1026–1048 show a composition bias toward polar residues; sequence PNRARNNTHSNLHTSIGNSVWGS. Positions 1090 to 1104 are enriched in low complexity; sequence NSTNKNKNNASLSKS. Residue K1123 forms a Glycyl lysine isopeptide (Lys-Gly) (interchain with G-Cter in SUMO2) linkage. Disordered regions lie at residues 1195–1230 and 1247–1271; these read RAKQ…QQDS and QSNN…KMVR. The segment covering 1202–1217 has biased composition (low complexity); the sequence is QQRQQQQLPQQQQQQP. Phosphoserine is present on S1284.

It belongs to the GIGYF family. In terms of assembly, component of the 4EHP-GYF2 complex, at least composed of EIF4E2, GIGYF2 and ZNF598. Interacts (via the 4EHP-binding motif) with EIF4E2; the interaction is direct. Interacts with ZFP36/TTP (via P-P-P-P-G repeats); the interaction is direct. Interacts with GRB10. Interacts (via DDX6 motif) with DDX6 (via RecA-like domain 2). (Microbial infection) Interacts with SARS coronavirus-2/SARS-CoV-2 non-structural protein 2 (nsp2); the interaction enhances GIGYF2 binding to EIF4E2.

Functionally, key component of the 4EHP-GYF2 complex, a multiprotein complex that acts as a repressor of translation initiation. In the 4EHP-GYF2 complex, acts as a factor that bridges EIF4E2 to ZFP36/TTP, linking translation repression with mRNA decay. Also recruits and bridges the association of the 4EHP complex with the decapping effector protein DDX6, which is required for the ZFP36/TTP-mediated down-regulation of AU-rich mRNA. May act cooperatively with GRB10 to regulate tyrosine kinase receptor signaling, including IGF1 and insulin receptors. In association with EIF4E2, assists ribosome-associated quality control (RQC) by sequestering the mRNA cap, blocking ribosome initiation and decreasing the translational load on problematic messages. Part of a pathway that works in parallel to RQC-mediated degradation of the stalled nascent polypeptide. GIGYF2 and EIF4E2 work downstream and independently of ZNF598, which seems to work as a scaffold that can recruit them to faulty mRNA even if alternative recruitment mechanisms may exist. Its function is as follows. (Microbial infection) Upon SARS coronavirus-2/SARS-CoV-2 infection, the interaction with non-structural protein 2 (nsp2) enhances GIGYF2 binding to EIF4E2 and increases repression of translation initiation of genes involved in antiviral innate immune response such as IFNB1. The sequence is that of GRB10-interacting GYF protein 2 from Homo sapiens (Human).